The chain runs to 1203 residues: Rho GTPase-activating protein gacGG (1203 aa).

7 RCC1 repeats span residues 52–104 (TGEL…AIME), 106–148 (GLLY…VVAD), 155–204 (KRSV…AIVE), 206–255 (NEVF…ARSG), 257–298 (GNVC…VLSE), 299–359 (KGEI…EGRN), and 361–410 (LSVY…YLRG). The disordered stretch occupies residues 316–343 (KLDVNSSPNINSSSGTTTPTTNTTTTTK). The span at 320 to 343 (NSSPNINSSSGTTTPTTNTTTTTK) shows a compositional bias: low complexity. The Rho-GAP domain maps to 381-594 (VDIAESMRRK…TIMKQYPLME (214 aa)). Residues 649-679 (TLEIKNNQNNQNNQKENNNNNNNINNSNNNN) adopt a coiled-coil conformation. Disordered regions lie at residues 657–725 (NNQN…TGNI), 746–789 (KDGN…NLSP), and 831–852 (FANSGSSSNNNNSNNSPSLIGS). 2 stretches are compositionally biased toward low complexity: residues 746-788 (KDGN…PNLS) and 833-852 (NSGSSSNNNNSNNSPSLIGS). The stretch at 995-1078 (FDLLEKSMTE…ISNQNLSRVN (84 aa)) forms a coiled coil.

The protein localises to the cytoplasm. Its function is as follows. Rho GTPase-activating protein involved in the signal transduction pathway. The protein is Rho GTPase-activating protein gacGG (gacGG) of Dictyostelium discoideum (Social amoeba).